We begin with the raw amino-acid sequence, 284 residues long: ATP phosphoribosyltransferase (284 aa).

The protein belongs to the ATP phosphoribosyltransferase family. Long subfamily. Mg(2+) is required as a cofactor.

It localises to the cytoplasm. The catalysed reaction is 1-(5-phospho-beta-D-ribosyl)-ATP + diphosphate = 5-phospho-alpha-D-ribose 1-diphosphate + ATP. Its pathway is amino-acid biosynthesis; L-histidine biosynthesis; L-histidine from 5-phospho-alpha-D-ribose 1-diphosphate: step 1/9. With respect to regulation, feedback inhibited by histidine. In terms of biological role, catalyzes the condensation of ATP and 5-phosphoribose 1-diphosphate to form N'-(5'-phosphoribosyl)-ATP (PR-ATP). Has a crucial role in the pathway because the rate of histidine biosynthesis seems to be controlled primarily by regulation of HisG enzymatic activity. The sequence is that of ATP phosphoribosyltransferase from Corynebacterium kroppenstedtii (strain DSM 44385 / JCM 11950 / CIP 105744 / CCUG 35717).